Reading from the N-terminus, the 206-residue chain is Small ribosomal subunit protein uS4 (206 aa).

Residues 96 to 156 enclose the S4 RNA-binding domain; the sequence is RRLDNVVYRM…EKSKNQLRIK (61 aa).

Belongs to the universal ribosomal protein uS4 family. Part of the 30S ribosomal subunit. Contacts protein S5. The interaction surface between S4 and S5 is involved in control of translational fidelity.

In terms of biological role, one of the primary rRNA binding proteins, it binds directly to 16S rRNA where it nucleates assembly of the body of the 30S subunit. With S5 and S12 plays an important role in translational accuracy. The protein is Small ribosomal subunit protein uS4 of Hahella chejuensis (strain KCTC 2396).